The primary structure comprises 505 residues: tRNA-2-methylthio-N(6)-dimethylallyladenosine synthase (505 aa).

Residues 10-126 (RSYEVRTYGC…LPALLDRARH (117 aa)) form the MTTase N-terminal domain. Residues Cys-19, Cys-55, Cys-89, Cys-163, Cys-167, and Cys-170 each contribute to the [4Fe-4S] cluster site. Residues 149–385 (RESAYAGWVS…IALQEQITLE (237 aa)) enclose the Radical SAM core domain. The region spanning 388 to 459 (QKLVGAEVEL…PHHLVADTPV (72 aa)) is the TRAM domain.

This sequence belongs to the methylthiotransferase family. MiaB subfamily. As to quaternary structure, monomer. It depends on [4Fe-4S] cluster as a cofactor.

It is found in the cytoplasm. It carries out the reaction N(6)-dimethylallyladenosine(37) in tRNA + (sulfur carrier)-SH + AH2 + 2 S-adenosyl-L-methionine = 2-methylsulfanyl-N(6)-dimethylallyladenosine(37) in tRNA + (sulfur carrier)-H + 5'-deoxyadenosine + L-methionine + A + S-adenosyl-L-homocysteine + 2 H(+). Functionally, catalyzes the methylthiolation of N6-(dimethylallyl)adenosine (i(6)A), leading to the formation of 2-methylthio-N6-(dimethylallyl)adenosine (ms(2)i(6)A) at position 37 in tRNAs that read codons beginning with uridine. The sequence is that of tRNA-2-methylthio-N(6)-dimethylallyladenosine synthase from Rhodococcus jostii (strain RHA1).